Consider the following 623-residue polypeptide: MKIFIIKIILVLFNYVLLSYSINQDLNILNVYDVRFAQTHVIPIEGKSWILNNKTYTLTIVGNRDSLLLVKFIDISITGTSSIKTVTTKTTKEEIKATILTNTYNVMVWNNDIVMGTRLLNDPNQLPPTESNGEQYSNEHHSIMIPKEWVKPGMKLQFFENSNSFIKSSKFIFPNVGQDYTLKMWTLPFYLFGANDTNTRPFNQTKNIDDSISAGLSQVYSCSNILSLNHPIQRVDWPYLVLGPRNGLPGMLITNSDQKKDGYAIMEGVLNILTGIRVAFGESTSSIQIYAPLLHLGANGKYADTYGGLGGSSRGTGDYRYSDTFVHEQGHAMGLPHAGEAFASGSYPYVNGSLLGSEWGFDINHYEFLSITLSNTSKNYKGCEKKNVKDTQNRCVKQSVMQSGAGDRSSNYLFSMFSDFEMSIIQNYFKNSIYYDEQIGKYKKWNETIGSYYEYKPITKDYGFYRLDDGIPIERDIDVYTIVFTYSLVGPEPLSQIYPLLKSKGNLIRQFDPTNKTEMKLITPNTGSIPWYCFNSGCDYTIRVTYDDDSIKHILLQQGKRQYWKPMGDFKLNFNDPTSSDSFLLGVINVKAIKTIKKVELLETLMAWNGISKNSKLLTFKLF.

The first 21 residues, 1–21 (MKIFIIKIILVLFNYVLLSYS), serve as a signal peptide directing secretion. The region spanning 174–435 (PNVGQDYTLK…QNYFKNSIYY (262 aa)) is the Peptidase M66 domain. His327 contributes to the Zn(2+) binding site. Residue Glu328 is part of the active site. Residues His331 and His337 each coordinate Zn(2+).

This sequence belongs to the dictomallein family. The cofactor is Zn(2+).

It localises to the secreted. In Dictyostelium discoideum (Social amoeba), this protein is Dictomallein-5 (dtmlE).